Reading from the N-terminus, the 455-residue chain is Ribulose bisphosphate carboxylase large chain (455 aa).

Residue K5 is modified to N6,N6,N6-trimethyllysine. Positions 114 and 164 each coordinate substrate. Catalysis depends on K166, which acts as the Proton acceptor. Substrate is bound at residue K168. K192, D194, and E195 together coordinate Mg(2+). K192 carries the post-translational modification N6-carboxylysine. H285 acts as the Proton acceptor in catalysis. Residues R286, H318, and S370 each coordinate substrate.

This sequence belongs to the RuBisCO large chain family. Type I subfamily. Heterohexadecamer of 8 large chains and 8 small chains; disulfide-linked. The disulfide link is formed within the large subunit homodimers. Mg(2+) serves as cofactor. The disulfide bond which can form in the large chain dimeric partners within the hexadecamer appears to be associated with oxidative stress and protein turnover.

Its subcellular location is the plastid. The protein localises to the chloroplast. The catalysed reaction is 2 (2R)-3-phosphoglycerate + 2 H(+) = D-ribulose 1,5-bisphosphate + CO2 + H2O. It catalyses the reaction D-ribulose 1,5-bisphosphate + O2 = 2-phosphoglycolate + (2R)-3-phosphoglycerate + 2 H(+). RuBisCO catalyzes two reactions: the carboxylation of D-ribulose 1,5-bisphosphate, the primary event in carbon dioxide fixation, as well as the oxidative fragmentation of the pentose substrate in the photorespiration process. Both reactions occur simultaneously and in competition at the same active site. The sequence is that of Ribulose bisphosphate carboxylase large chain from Lupinus microcarpus (Chick lupine).